We begin with the raw amino-acid sequence, 135 residues long: Single-stranded DNA-binding protein RIM1, mitochondrial (135 aa).

Residues 1 to 17 (MFLRTQARFFHATTKKM) constitute a mitochondrion transit peptide. The 99-residue stretch at 19 to 117 (FSKMSIVGRI…LVQKDINLLK (99 aa)) folds into the SSB domain.

In terms of assembly, homotetramer. Interacts with PIF1.

The protein localises to the mitochondrion. This protein binds preferentially and cooperatively to single-stranded DNA (ssDNS). Involved in mitochondrial DNA replication. Stimulates PIF1 helicase activity. This is Single-stranded DNA-binding protein RIM1, mitochondrial (RIM1) from Saccharomyces cerevisiae (strain ATCC 204508 / S288c) (Baker's yeast).